The primary structure comprises 223 residues: Serine/threonine/tyrosine-interacting protein (223 aa).

Positions 28–176 (EMQEILPGLF…LQEYEAIYLA (149 aa)) constitute a Tyrosine-protein phosphatase domain. Residues 76–78 (FQQ) carry the Interaction with FBXW7 motif. A phosphoserine mark is found at S184, S193, and S201. The tract at residues 197 to 223 (GTTGSLKRTHEEEDDFGTMQVATAQNG) is disordered.

Belongs to the protein-tyrosine phosphatase family. Non-receptor class subfamily. Interacts with MAPK1; independently of MAPK1 phosphorylation status. Interacts with CARHSP1/Crhsp-24. Interacts (via FQQ motif) with FBXW7 (via F-box domain); the interaction is direct and prevents FBXW7 interaction with SKP1, a component of the SCF(FBXW7) complex.

Its subcellular location is the nucleus. It is found in the cytoplasm. The protein resides in the cytosol. In terms of biological role, catalytically inactive phosphatase. Acts as a nuclear anchor for MAPK1/MAPK3 (ERK1/ERK2). Modulates cell-fate decisions and cell migration by spatiotemporal regulation of MAPK1/MAPK3 (ERK1/ERK2). By binding to the F-box of FBXW7, prevents the assembly of FBXW7 into the SCF E3 ubiquitin-protein ligase complex, and thereby inhibits degradation of its substrates. Plays a role in spermatogenesis. This Pongo abelii (Sumatran orangutan) protein is Serine/threonine/tyrosine-interacting protein (STYX).